Reading from the N-terminus, the 208-residue chain is Protein GrpE (208 aa).

Residues Met1 to Thr12 show a composition bias toward basic and acidic residues. The interval Met1 to Asn51 is disordered. Polar residues predominate over residues Glu13 to Gln23. Acidic residues predominate over residues Glu42–Asn51.

It belongs to the GrpE family. As to quaternary structure, homodimer.

It localises to the cytoplasm. Functionally, participates actively in the response to hyperosmotic and heat shock by preventing the aggregation of stress-denatured proteins, in association with DnaK and GrpE. It is the nucleotide exchange factor for DnaK and may function as a thermosensor. Unfolded proteins bind initially to DnaJ; upon interaction with the DnaJ-bound protein, DnaK hydrolyzes its bound ATP, resulting in the formation of a stable complex. GrpE releases ADP from DnaK; ATP binding to DnaK triggers the release of the substrate protein, thus completing the reaction cycle. Several rounds of ATP-dependent interactions between DnaJ, DnaK and GrpE are required for fully efficient folding. This chain is Protein GrpE, found in Staphylococcus aureus (strain USA300).